Here is a 585-residue protein sequence, read N- to C-terminus: Lipoprotein LpqB (585 aa).

The signal sequence occupies residues 1–17 (MGRKLLGLLMLAVLLAG). C18 is lipidated: N-palmitoyl cysteine. Residue C18 is the site of S-diacylglycerol cysteine attachment. 2 disordered regions span residues 24 to 48 (SSAPQAIGTVERPAPSNLPKPTPGM) and 560 to 585 (PSADGQQGWSEVPGLTVPGAAPVLPG).

This sequence belongs to the LpqB lipoprotein family.

The protein localises to the cell membrane. This chain is Lipoprotein LpqB, found in Mycolicibacterium paratuberculosis (strain ATCC BAA-968 / K-10) (Mycobacterium paratuberculosis).